The sequence spans 451 residues: Cindoxin reductase (451 aa).

The FAD site is built by alanine 24, glutamate 45, leucine 53, and valine 89. NADP(+) contacts are provided by residues asparagine 157–valine 160 and arginine 197–serine 198. FAD-binding positions include tryptophan 338 and glycine 345–isoleucine 347. Residue glycine 345 participates in NADP(+) binding.

The protein belongs to the ferredoxin--NADP reductase type 1 family. Requires FAD as cofactor.

In terms of biological role, involved in the degradation of cineol (eucalyptol). Catalyzes the reduction of cindoxin (CinC). In Citrobacter braakii, this protein is Cindoxin reductase (cinB).